The chain runs to 426 residues: MLAILGFVMMIVFMYLIMSNRLSALIALIVVPIVFALISGFGKDLGEMMIQGVTDLAPTGIMLLFAILYFGIMIDSGLFDPLIAKILSFVKGDPLKIAVGTAVLTMTISLDGDGTTTYMITIAAMLPLYKRLGMNRLVLAGIAMLGSGVMNIIPWGGPTARVLASLKLDTSEVFTPLIPAMIAGILWVIAVAYILGKKERKRLGVISIDHAPSSDPEAAPLKRPALQWFNLLLTVALMAALITSLLPLPVLFMTAFAVALMVNYPNVKEQQKRISAHAGNALNVVSMVFAAGIFTGILSGTKMVDAMAHSLVSLIPDAMGPHLPLITAIVSMPFTFFMSNDAFYFGVLPIIAEAASAYGIDAAEIGRASLLGQPVHLLSPLVPSTYLLVGMAGVSFGDHQKFTIKWAVGTTIVMTIAALLIGIISF.

12 consecutive transmembrane segments (helical) span residues 1–21 (MLAI…MSNR), 22–42 (LSAL…SGFG), 59–79 (TGIM…SGLF), 86–106 (ILSF…VLTM), 137–157 (LVLA…PWGG), 176–196 (PLIP…YILG), 232–252 (LLTV…PVLF), 278–298 (AGNA…TGIL), 318–338 (AMGP…TFFM), 343–363 (FYFG…IDAA), 377–397 (LLSP…VSFG), and 406–426 (WAVG…IISF).

Belongs to the CitM (TC 2.A.11) transporter family.

It is found in the cell membrane. Its function is as follows. Transports the free citrate anion. Probably cotransports citrate and at least three or four protons. The citrate uptake is inhibited by the presence of magnesium ions. The sequence is that of Citrate transporter (citN) from Bacillus subtilis (strain 168).